A 510-amino-acid chain; its full sequence is Histidine ammonia-lyase (510 aa).

The 5-imidazolinone (Ala-Gly) cross-link spans 143–145; that stretch reads ASG. Ser144 is subject to 2,3-didehydroalanine (Ser).

It belongs to the PAL/histidase family. Contains an active site 4-methylidene-imidazol-5-one (MIO), which is formed autocatalytically by cyclization and dehydration of residues Ala-Ser-Gly.

The protein localises to the cytoplasm. The catalysed reaction is L-histidine = trans-urocanate + NH4(+). The protein operates within amino-acid degradation; L-histidine degradation into L-glutamate; N-formimidoyl-L-glutamate from L-histidine: step 1/3. This Aliivibrio fischeri (strain ATCC 700601 / ES114) (Vibrio fischeri) protein is Histidine ammonia-lyase.